The chain runs to 297 residues: MKRPDYRTLQALDAVIRERGFERAAQKLCITQSAVSQRIKQLENTFGQPLLVRTVPPRPTEQGQKLLALLRQVELLEEEWLGDEQTGSTPLLLSLAVNADSLATWLLPALAPVLADSPVRLNLQVEDETRTQERLRRGEVVGAVSIQPQALPSCLVDQLGALDYLFVASKPFADRYFPNGVTRASLLKAPAVAFDHLDDMHQAFLQQNFDLPPGSVPCHIVNSSEAFVQLARQGTTCCMIPHLQIEKELQSGELIDLTPGLYQRRMLFWHRFAPESRMMRKVTDALLEYGHKVLRQD.

Residues 4 to 60 (PDYRTLQALDAVIRERGFERAAQKLCITQSAVSQRIKQLENTFGQPLLVRTVPPRPT) enclose the HTH lysR-type domain. The H-T-H motif DNA-binding region spans 21–40 (FERAAQKLCITQSAVSQRIK).

The protein belongs to the LysR transcriptional regulatory family. In terms of assembly, homodimer.

Functionally, controls the transcription of genes involved in arginine and lysine metabolism. The sequence is that of HTH-type transcriptional regulator ArgP from Cronobacter sakazakii (strain ATCC BAA-894) (Enterobacter sakazakii).